The following is a 405-amino-acid chain: 8-amino-7-oxononanoate synthase 1 (405 aa).

A substrate-binding site is contributed by Arg-29. 116–117 (GY) is a binding site for pyridoxal 5'-phosphate. Substrate is bound at residue His-141. The pyridoxal 5'-phosphate site is built by Ser-187, His-215, and Thr-247. N6-(pyridoxal phosphate)lysine is present on Lys-250. Thr-368 lines the substrate pocket.

This sequence belongs to the class-II pyridoxal-phosphate-dependent aminotransferase family. BioF subfamily. In terms of assembly, homodimer. The cofactor is pyridoxal 5'-phosphate.

It carries out the reaction 6-carboxyhexanoyl-[ACP] + L-alanine + H(+) = (8S)-8-amino-7-oxononanoate + holo-[ACP] + CO2. The protein operates within cofactor biosynthesis; biotin biosynthesis. Its function is as follows. Catalyzes the decarboxylative condensation of pimeloyl-[acyl-carrier protein] and L-alanine to produce 8-amino-7-oxononanoate (AON), [acyl-carrier protein], and carbon dioxide. The sequence is that of 8-amino-7-oxononanoate synthase 1 from Polaromonas sp. (strain JS666 / ATCC BAA-500).